A 202-amino-acid polypeptide reads, in one-letter code: NADH-quinone oxidoreductase subunit B 2 (202 aa).

4 residues coordinate [4Fe-4S] cluster: Cys-38, Cys-39, Cys-104, and Cys-133.

This sequence belongs to the complex I 20 kDa subunit family. NDH-1 is composed of 14 different subunits. Subunits NuoB, C, D, E, F, and G constitute the peripheral sector of the complex. [4Fe-4S] cluster is required as a cofactor.

It localises to the cell inner membrane. It catalyses the reaction a quinone + NADH + 5 H(+)(in) = a quinol + NAD(+) + 4 H(+)(out). Its function is as follows. NDH-1 shuttles electrons from NADH, via FMN and iron-sulfur (Fe-S) centers, to quinones in the respiratory chain. The immediate electron acceptor for the enzyme in this species is believed to be ubiquinone. Couples the redox reaction to proton translocation (for every two electrons transferred, four hydrogen ions are translocated across the cytoplasmic membrane), and thus conserves the redox energy in a proton gradient. This Koribacter versatilis (strain Ellin345) protein is NADH-quinone oxidoreductase subunit B 2.